Consider the following 317-residue polypeptide: Melanocyte-stimulating hormone receptor (317 aa).

The Extracellular segment spans residues 1–37 (MSVQGPQRRLLGSVNSTSPAAPRLGLAANQTGPRCLE). Residues asparagine 15 and asparagine 29 are each glycosylated (N-linked (GlcNAc...) asparagine). Residues 38–63 (VSVPDGLFLSLGLVSVVENVLVVAAI) traverse the membrane as a helical segment. Residues 64–72 (AKNRNLHSP) are Cytoplasmic-facing. A helical membrane pass occupies residues 73 to 93 (MYYFICCLAVSDLLVSVSSVL). Over 94-118 (ETAVMLLLEAGTLAGRAAVVQQLDD) the chain is Extracellular. The helical transmembrane segment at 119-140 (IIDVLVCGAMVSSLCFLGAIAV) threads the bilayer. The Cytoplasmic segment spans residues 141 to 163 (DRYISIFYALRYHSIVTLPRAWR). A helical transmembrane segment spans residues 164 to 183 (AISAIWVASVLSSTLFIAYY). The Extracellular segment spans residues 184–191 (DHTAVLLC). Residues 192 to 211 (LVSFFVAMLVLMAVLYVHML) form a helical membrane-spanning segment. Residues 212–240 (ARACQHARGIARLHKRQRPVHQGLGLKGA) lie on the Cytoplasmic side of the membrane. A helical transmembrane segment spans residues 241-266 (ATLTILLGIFFLCWGPFFLHLSLMVL). The Extracellular segment spans residues 267–279 (CPRHPICGCVFKN). Residues 280-300 (FNLFLTLIICNSIVDPLIYAF) traverse the membrane as a helical segment. Topologically, residues 301–317 (RSQELRKTLREVLLCSW) are cytoplasmic. Residue cysteine 315 is the site of S-palmitoyl cysteine attachment.

It belongs to the G-protein coupled receptor 1 family. Interacts with MGRN1, but does not undergo MGRN1-mediated ubiquitination; this interaction competes with GNAS-binding and thus inhibits agonist-induced cAMP production. Interacts with OPN3; the interaction results in a decrease in MC1R-mediated cAMP signaling and ultimately a decrease in melanin production in melanocytes.

The protein resides in the cell membrane. In terms of biological role, receptor for MSH (alpha, beta and gamma) and ACTH. The activity of this receptor is mediated by G proteins which activate adenylate cyclase. Mediates melanogenesis, the production of eumelanin (black/brown) and phaeomelanin (red/yellow), via regulation of cAMP signaling in melanocytes. This chain is Melanocyte-stimulating hormone receptor (MC1R), found in Puma yagouaroundi (Jaguarundi).